The following is a 403-amino-acid chain: Phosphopentomutase (403 aa).

6 residues coordinate Mn(2+): D13, D298, H303, D339, H340, and H351.

This sequence belongs to the phosphopentomutase family. Mn(2+) is required as a cofactor.

Its subcellular location is the cytoplasm. It carries out the reaction 2-deoxy-alpha-D-ribose 1-phosphate = 2-deoxy-D-ribose 5-phosphate. The enzyme catalyses alpha-D-ribose 1-phosphate = D-ribose 5-phosphate. Its pathway is carbohydrate degradation; 2-deoxy-D-ribose 1-phosphate degradation; D-glyceraldehyde 3-phosphate and acetaldehyde from 2-deoxy-alpha-D-ribose 1-phosphate: step 1/2. Isomerase that catalyzes the conversion of deoxy-ribose 1-phosphate (dRib-1-P) and ribose 1-phosphate (Rib-1-P) to deoxy-ribose 5-phosphate (dRib-5-P) and ribose 5-phosphate (Rib-5-P), respectively. The chain is Phosphopentomutase from Streptococcus uberis (strain ATCC BAA-854 / 0140J).